Here is a 246-residue protein sequence, read N- to C-terminus: tRNA (guanine-N(1)-)-methyltransferase (246 aa).

Residues G114 and 134 to 139 (IGDYIL) each bind S-adenosyl-L-methionine.

The protein belongs to the RNA methyltransferase TrmD family. Homodimer.

It localises to the cytoplasm. It carries out the reaction guanosine(37) in tRNA + S-adenosyl-L-methionine = N(1)-methylguanosine(37) in tRNA + S-adenosyl-L-homocysteine + H(+). Its function is as follows. Specifically methylates guanosine-37 in various tRNAs. This chain is tRNA (guanine-N(1)-)-methyltransferase, found in Coxiella burnetii (strain CbuG_Q212) (Coxiella burnetii (strain Q212)).